The primary structure comprises 593 residues: Methylenetetrahydrofolate reductase (NADH) 1 (593 aa).

The Proton donor/acceptor role is filled by Glu21. Residues Glu21–Lys26 and Thr52–Trp53 each bind NAD(+). FAD-binding positions include Thr52 to Trp53, His81, Arg111 to Asp113, Tyr153, His157 to Ala160, Asp175, and Lys182. Asp113 provides a ligand contact to substrate. Residues Gln193 and Tyr285 each coordinate substrate.

It belongs to the methylenetetrahydrofolate reductase family. In terms of assembly, homodimer. The cofactor is FAD.

It catalyses the reaction (6S)-5-methyl-5,6,7,8-tetrahydrofolate + NAD(+) = (6R)-5,10-methylene-5,6,7,8-tetrahydrofolate + NADH + H(+). It functions in the pathway one-carbon metabolism; tetrahydrofolate interconversion. Plant MTHFRs strongly prefer NADH over NADPH. Not inhibited by methionine or S-adenosylmethionine. Its function is as follows. The probable reversibility of the MTHFR reaction in plants suggests that they can metabolize the methyl group of 5,10-methylenetetrahydrofolate to serine, sugars and starch. The sequence is that of Methylenetetrahydrofolate reductase (NADH) 1 from Zea mays (Maize).